The sequence spans 246 residues: Acetoacetate decarboxylase (246 aa).

The Schiff-base intermediate with acetoacetate role is filled by lysine 116.

Belongs to the ADC family.

The catalysed reaction is acetoacetate + H(+) = acetone + CO2. Catalyzes the conversion of acetoacetate to acetone and carbon dioxide. The polypeptide is Acetoacetate decarboxylase (Burkholderia mallei (strain NCTC 10247)).